We begin with the raw amino-acid sequence, 502 residues long: MGSLDSNYDTESPASVGQFNPLDPEEFRKQAHCIVDFIADYYKNIESYPVLSQVDPGYRHSRLGKNAPYRSEPFESILKDVQKDIIPGMTHWMSPNFFAHFPATVSSAAFVGEMLCTCFNSVGFNWLASPAATELEMVVIDWLANMLKLPKSFMFSGTGGGVLQGTTSEAILCTLIAASPMHFEIVGVKTSTSFVVYGSDQTHSTYAKACKLAGILPCNIRSIPTTADSNFSVSPLLLRRAIEADKAAGMVPLYICATVGTTSTTAIDPLSSLADVANDYGVWFHVDAAYAGSACICPEFRHYLDGIERADSLSLSPHKWLLSYLDCCCLWVKSPSLLVKALSTDPEYLKNQPSESKSVVDYKDWQVGTGRRFKALRLWFVMRSYGVANLQSHIRTDVQMAKMFEGFVKSDPRFEILVPRVFSLVCFRLNPISGSDPTGTEALNRKLLDWVNSTGRVYMTHTKVGGIYMLRFAVGATLTEKRHVSSAWKLIKEGADVLLKED.

Polar residues predominate over residues 1-18; that stretch reads MGSLDSNYDTESPASVGQ. The segment at 1 to 21 is disordered; the sequence is MGSLDSNYDTESPASVGQFNP. K319 carries the post-translational modification N6-(pyridoxal phosphate)lysine.

Belongs to the group II decarboxylase family. Pyridoxal 5'-phosphate serves as cofactor. In terms of tissue distribution, highly expressed in apex. Expressed in young stem and bark tissues. Expressed at low levels in leaves, fruits and seeds.

The catalysed reaction is L-tryptophan + H(+) = tryptamine + CO2. Involved in the biosynthesis of tryptamine. Supplies tryptamine for the indole moiety of camptothecin (CPT), an anti-cancer monoterpene alkaloid. Represents a key step in monoterpene indole alkaloid biosynthesis. Is specific for tryptophan, and inactive against tyrosine, phenylalanine and 3,4-dihydroxyphenylalanine (dopa). This chain is Tryptophan decarboxylase TDC1, found in Camptotheca acuminata (Happy tree).